Here is a 149-residue protein sequence, read N- to C-terminus: Putative prefoldin subunit alpha (149 aa).

Belongs to the prefoldin subunit alpha family.

It localises to the cytoplasm. Functionally, molecular chaperone capable of stabilizing a range of proteins. This Aquifex aeolicus (strain VF5) protein is Putative prefoldin subunit alpha.